We begin with the raw amino-acid sequence, 144 residues long: D-aminoacyl-tRNA deacylase (144 aa).

A Gly-cisPro motif, important for rejection of L-amino acids motif is present at residues 136 to 137 (GP).

It belongs to the DTD family. Homodimer.

The protein localises to the cytoplasm. The enzyme catalyses glycyl-tRNA(Ala) + H2O = tRNA(Ala) + glycine + H(+). The catalysed reaction is a D-aminoacyl-tRNA + H2O = a tRNA + a D-alpha-amino acid + H(+). An aminoacyl-tRNA editing enzyme that deacylates mischarged D-aminoacyl-tRNAs. Also deacylates mischarged glycyl-tRNA(Ala), protecting cells against glycine mischarging by AlaRS. Acts via tRNA-based rather than protein-based catalysis; rejects L-amino acids rather than detecting D-amino acids in the active site. By recycling D-aminoacyl-tRNA to D-amino acids and free tRNA molecules, this enzyme counteracts the toxicity associated with the formation of D-aminoacyl-tRNA entities in vivo and helps enforce protein L-homochirality. The sequence is that of D-aminoacyl-tRNA deacylase from Glaesserella parasuis serovar 5 (strain SH0165) (Haemophilus parasuis).